The following is a 390-amino-acid chain: Calcium-binding and spermatid-specific protein 1 (390 aa).

3 disordered regions span residues 1–23, 82–109, and 146–225; these read MAEDGSPKIYSRPPRDSSKTPTE, ASLKSTTLPEKEITTPTETTNSKPKESI, and TIDA…TIPD. The span at 162 to 174 shows a compositional bias: acidic residues; sequence ETQEDSSANDEDT. Low complexity predominate over residues 184 to 193; sequence TDVSSSTSSD. Residues S251 and S267 each carry the phosphoserine modification. T280 carries the phosphothreonine; by CK2 modification. At S312 the chain carries Phosphoserine. Over residues 330-344 the composition is skewed to basic and acidic residues; the sequence is EPHVDTKNSPEKDAA. The segment at 330–390 is disordered; sequence EPHVDTKNSP…LKEEPDELMM (61 aa). 4 positions are modified to phosphoserine: S346, S356, S371, and S375. Positions 346–364 are enriched in polar residues; the sequence is SVTNVTEEFPSVTSVVEQS.

In terms of tissue distribution, expressed in seminiferous tubules of the testis in step 10 spermatids (stage X), subsequently increasing to reach maximal levels of step 18 elongated spermatids (stage VI) (at protein level). Strongly expressed in testis. Weakly expressed in olfactory epithelium. Expressed in spermatids of seminiferous tubules at steps 4-14 (stages IV to XIV of the seminiferous epithelium classification).

The protein resides in the cytoplasm. It is found in the mitochondrion inner membrane. The protein localises to the cell projection. Its subcellular location is the cilium. It localises to the flagellum. The protein resides in the cytoplasmic vesicle. It is found in the secretory vesicle. The protein localises to the acrosome. In terms of biological role, calcium-binding protein. Essential for maintaining the structural integrity of the sperm flagella. The chain is Calcium-binding and spermatid-specific protein 1 (Cabs1) from Rattus norvegicus (Rat).